Consider the following 365-residue polypeptide: Large ribosomal subunit protein uL3 (365 aa).

The interval 343 to 365 (RPPKKKPPVQRPQITYVSVESKQ) is disordered. Polar residues predominate over residues 354–365 (PQITYVSVESKQ).

This sequence belongs to the universal ribosomal protein uL3 family. In terms of assembly, part of the 50S ribosomal subunit. Forms a cluster with proteins L14 and L24e.

One of the primary rRNA binding proteins, it binds directly near the 3'-end of the 23S rRNA, where it nucleates assembly of the 50S subunit. This is Large ribosomal subunit protein uL3 from Pyrococcus furiosus (strain ATCC 43587 / DSM 3638 / JCM 8422 / Vc1).